We begin with the raw amino-acid sequence, 106 residues long: ATPase inhibitor, mitochondrial (106 aa).

The transit peptide at 1–25 (MAGSALAVRARFGVWGMKVLQTRGF) directs the protein to the mitochondrion. An N-terminal inhibitory region region spans residues 26-52 (VSDSSDSMDTGAGSIREAGGAFGKREK). Residues 26–58 (VSDSSDSMDTGAGSIREAGGAFGKREKAEEDRY) form a disordered region. A Phosphoserine modification is found at serine 39. Positions 48 to 58 (GKREKAEEDRY) are enriched in basic and acidic residues. Residues 60 to 106 (REKTKEQLAALRKHHEDEIDHHSKEIERLQKQIERHKKKIQQLKNNH) are a coiled coil. The antiparallel alpha-helical coiled coil region stretch occupies residues 74 to 106 (HEDEIDHHSKEIERLQKQIERHKKKIQQLKNNH). At lysine 103 the chain carries N6-succinyllysine.

This sequence belongs to the ATPase inhibitor family. In terms of assembly, homodimer; represents the active form and is present at a pH value below 6.5. Homotetramer; represents the inactive form and is present at a pH value above 7.0.

Its subcellular location is the mitochondrion. Functionally, endogenous F(1)F(o)-ATPase inhibitor limiting ATP depletion when the mitochondrial membrane potential falls below a threshold and the F(1)F(o)-ATP synthase starts hydrolyzing ATP to pump protons out of the mitochondrial matrix. Required to avoid the consumption of cellular ATP when the F(1)F(o)-ATP synthase enzyme acts as an ATP hydrolase. Indirectly acts as a regulator of heme synthesis in erythroid tissues: regulates heme synthesis by modulating the mitochondrial pH and redox potential, allowing FECH to efficiently catalyze the incorporation of iron into protoporphyrin IX to produce heme. The chain is ATPase inhibitor, mitochondrial from Mus musculus (Mouse).